The sequence spans 329 residues: MSSDRTSVVVSKRDAGGFEYPFAASCHPGREVTEQRTLAWVRRLRLVPDGRSLSRLKATNFSHLAAWLLPSASTQTLQLASDFTAVLFLLDDAYDEGQLSTDPESVEWLNEKYLGELFGYTEADMSDPLTRGMLDVRERIRRSHPHFFLNRWLSHFQYYYEANLWEANNRKQMRVPHLEEYLMMRRYSGAVYTYCDLLELLLERPLPLEVVQHPLIQTVRDICNDILCWTNDYFSLGKELTNGETHNLIVVLRNECVSTLEEAIDRLKDMHDRRVAEYQGVKEKVLALWADDEIRLYLDAVEAMIAGNQRWALEAGRYSGLESLIVRAG.

Mg(2+) is bound by residues D91 and E96. The DDXXD motif motif lies at 91 to 95; that stretch reads DDAYD. Residue R185 participates in substrate binding. Mg(2+)-binding residues include N231 and S235. K238 contributes to the substrate binding site. Position 239 (E239) interacts with Mg(2+). Substrate is bound at residue 317-318; the sequence is RY.

It belongs to the terpene synthase family. It depends on Mg(2+) as a cofactor.

The catalysed reaction is (2E,6E)-farnesyl diphosphate = (+)-eremophilene + diphosphate. The protein operates within secondary metabolite biosynthesis; terpenoid biosynthesis. Its function is as follows. Catalyzes the conversion of (2E,6E)-farnesyl diphosphate (FPP) to yield the bicyclic sesquiterpene eremophilene via a 1,10-cyclization, which requires the abstraction of the pyrophosphate from FPP to yield the (E,E)-germacradienyl cation. The only accepted substrate is farnesyl diphosphate (FPP). This Sorangium cellulosum (strain So ce56) (Polyangium cellulosum (strain So ce56)) protein is (+)-eremophilene synthase.